The primary structure comprises 87 residues: Small ribosomal subunit protein uS15c (87 aa).

This sequence belongs to the universal ribosomal protein uS15 family. In terms of assembly, part of the 30S ribosomal subunit.

Its subcellular location is the plastid. It localises to the chloroplast. The sequence is that of Small ribosomal subunit protein uS15c (rps15) from Nicotiana tabacum (Common tobacco).